The following is a 318-amino-acid chain: Oncosphere antigen A (318 aa).

3 Fibronectin type-III domains span residues 6 to 103, 109 to 207, and 211 to 308; these read IPQN…TPLP, KPSF…ISRA, and VPQN…TPSV.

The sequence is that of Oncosphere antigen A (ONCA) from Hydatigena taeniaeformis (Feline tapeworm).